The primary structure comprises 239 residues: uncharacterized protein (239 aa).

In terms of domain architecture, S4 RNA-binding spans 1–65 (MRLDKLLANS…DYREFIYLMM (65 aa)). Catalysis depends on Asp-103, which acts as the Nucleophile.

It belongs to the pseudouridine synthase RsuA family.

It catalyses the reaction a uridine in RNA = a pseudouridine in RNA. This is an uncharacterized protein from Bacillus subtilis (strain 168).